The primary structure comprises 161 residues: ATP synthase subunit b (161 aa).

A helical membrane pass occupies residues isoleucine 12–leucine 32.

The protein belongs to the ATPase B chain family. F-type ATPases have 2 components, F(1) - the catalytic core - and F(0) - the membrane proton channel. F(1) has five subunits: alpha(3), beta(3), gamma(1), delta(1), epsilon(1). F(0) has three main subunits: a(1), b(2) and c(10-14). The alpha and beta chains form an alternating ring which encloses part of the gamma chain. F(1) is attached to F(0) by a central stalk formed by the gamma and epsilon chains, while a peripheral stalk is formed by the delta and b chains.

Its subcellular location is the cell membrane. Its function is as follows. F(1)F(0) ATP synthase produces ATP from ADP in the presence of a proton or sodium gradient. F-type ATPases consist of two structural domains, F(1) containing the extramembraneous catalytic core and F(0) containing the membrane proton channel, linked together by a central stalk and a peripheral stalk. During catalysis, ATP synthesis in the catalytic domain of F(1) is coupled via a rotary mechanism of the central stalk subunits to proton translocation. Component of the F(0) channel, it forms part of the peripheral stalk, linking F(1) to F(0). This is ATP synthase subunit b from Wigglesworthia glossinidia brevipalpis.